The sequence spans 400 residues: Tryptophan--tRNA ligase (400 aa).

Residues Pro-12–His-20 carry the 'HIGH' region motif. The insert stretch occupies residues Arg-173 to Arg-241. Positions Lys-265–Ser-269 match the 'KMSKS' region motif. Lys-268 serves as a coordination point for ATP. The disordered stretch occupies residues Lys-280–Pro-305. Residues Ala-295–Asp-304 are compositionally biased toward basic and acidic residues.

Belongs to the class-I aminoacyl-tRNA synthetase family. In terms of assembly, homodimer.

It is found in the cytoplasm. It carries out the reaction tRNA(Trp) + L-tryptophan + ATP = L-tryptophyl-tRNA(Trp) + AMP + diphosphate + H(+). The chain is Tryptophan--tRNA ligase (trpS) from Ralstonia nicotianae (strain ATCC BAA-1114 / GMI1000) (Ralstonia solanacearum).